Here is an 85-residue protein sequence, read N- to C-terminus: UPF0386 protein MXAN_1729 (85 aa).

Belongs to the UPF0386 family.

The polypeptide is UPF0386 protein MXAN_1729 (Myxococcus xanthus (strain DK1622)).